Reading from the N-terminus, the 173-residue chain is MKKNRLLFRVIILLILSGAVGFTLYQGFFADKEKMQIGKEAPNFVVTDLEGKKIELKDLKGKGVFLNFWGTWCKPCEKEMPYMNELYPKYKEKGVEIIALDADETDIAVKNFVNQYGLKFPVAIDKGQKIIGTYGVGPLPTSFLIDKDGKVVEQIIGEQTKEQLEGYLKKITP.

Residues 10–29 (VIILLILSGAVGFTLYQGFF) traverse the membrane as a helical; Signal-anchor for type II membrane protein segment. The Thioredoxin domain maps to 35-173 (MQIGKEAPNF…LEGYLKKITP (139 aa)). Cysteines 73 and 76 form a disulfide.

The protein belongs to the thioredoxin family. ResA subfamily.

It localises to the cell membrane. It functions in the pathway protein modification; cytochrome c assembly. Its function is as follows. Thiol-disulfide oxidoreductase which is required in disulfide reduction during c-type cytochrome synthesis. May accept reducing equivalents from CcdA, leading to breakage of disulfide bonds in apocytochrome c; following this reduction heme can be covalently attached. This Bacillus thuringiensis (strain Al Hakam) protein is Thiol-disulfide oxidoreductase ResA.